The sequence spans 117 residues: Large ribosomal subunit protein bL20 (117 aa).

This sequence belongs to the bacterial ribosomal protein bL20 family.

Its function is as follows. Binds directly to 23S ribosomal RNA and is necessary for the in vitro assembly process of the 50S ribosomal subunit. It is not involved in the protein synthesizing functions of that subunit. The polypeptide is Large ribosomal subunit protein bL20 (Helicobacter hepaticus (strain ATCC 51449 / 3B1)).